The primary structure comprises 83 residues: UPF0297 protein DSY2420 (83 aa).

Belongs to the UPF0297 family.

The protein is UPF0297 protein DSY2420 of Desulfitobacterium hafniense (strain Y51).